A 703-amino-acid chain; its full sequence is Subtilisin-like protease SBT4.7 (703 aa).

The first 19 residues, 1 to 19 (MAKRDYFCFVVLFLSSVSA), serve as a signal peptide directing secretion. Positions 20-107 (VIDDPQNKQV…VFPNINYKLQ (88 aa)) are cleaved as a propeptide — activation peptide. One can recognise an Inhibitor I9 domain in the interval 29–106 (VYVVYMGSLP…SVFPNINYKL (78 aa)). In terms of domain architecture, Peptidase S8 spans 111 to 556 (SWDFLGLKEG…AGHVDQIAAI (446 aa)). D139 (charge relay system) is an active-site residue. N170 carries N-linked (GlcNAc...) asparagine glycosylation. H194 serves as the catalytic Charge relay system. N217, N360, N416, and N433 each carry an N-linked (GlcNAc...) asparagine glycan. In terms of domain architecture, PA spans 350-411 (KYPLVYGDNF…LLPPDDFDSL (62 aa)). S495 serves as the catalytic Charge relay system. N-linked (GlcNAc...) asparagine glycosylation is found at N577, N615, and N633.

This sequence belongs to the peptidase S8 family. The C-terminal propeptide is autocleaved.

The protein resides in the secreted. The sequence is that of Subtilisin-like protease SBT4.7 from Arabidopsis thaliana (Mouse-ear cress).